Consider the following 449-residue polypeptide: Glycosyl hydrolase-like protein 1 (449 aa).

A beta-D-glucoside contacts are provided by residues Q22, H119, 164–165 (NE), Y292, E350, W393, and Y406. E165 (proton donor) is an active-site residue. E350 acts as the Nucleophile in catalysis.

It belongs to the glycosyl hydrolase 1 family. As to expression, mainly expressed in flowers, flower buds and young leaves, and, to a lesser extent, in old leaves, stems and roots.

Its subcellular location is the cytoplasm. The protein operates within secondary metabolite biosynthesis; terpenoid biosynthesis. Functionally, component of the oleanane-type triterpene saponins (e.g. saponarioside A and saponarioside B) biosynthetic pathway, leading to the production of natural products with detergent properties used as traditional sources of soap. Beta-glycosidase that catalyzes the transfer of glucose moiety to QA-triFRXX to produce QA-triF(Q)RXX via the elongation of the C-28 sugar chain with a D-quinovose. This Saponaria officinalis (Common soapwort) protein is Glycosyl hydrolase-like protein 1.